A 202-amino-acid chain; its full sequence is Ribonuclease HII (202 aa).

One can recognise an RNase H type-2 domain in the interval 12–201 (LLIAGVDEAG…VRQLKLFIPE (190 aa)). Residues D18, E19, and D110 each coordinate a divalent metal cation.

Belongs to the RNase HII family. Requires Mn(2+) as cofactor. Mg(2+) is required as a cofactor.

It is found in the cytoplasm. It catalyses the reaction Endonucleolytic cleavage to 5'-phosphomonoester.. Endonuclease that specifically degrades the RNA of RNA-DNA hybrids. This is Ribonuclease HII from Coxiella burnetii (strain CbuG_Q212) (Coxiella burnetii (strain Q212)).